The following is a 173-amino-acid chain: Large ribosomal subunit protein uL10 (173 aa).

This sequence belongs to the universal ribosomal protein uL10 family. In terms of assembly, part of the ribosomal stalk of the 50S ribosomal subunit. The N-terminus interacts with L11 and the large rRNA to form the base of the stalk. The C-terminus forms an elongated spine to which L12 dimers bind in a sequential fashion forming a multimeric L10(L12)X complex.

Forms part of the ribosomal stalk, playing a central role in the interaction of the ribosome with GTP-bound translation factors. The sequence is that of Large ribosomal subunit protein uL10 from Chloroherpeton thalassium (strain ATCC 35110 / GB-78).